Reading from the N-terminus, the 186-residue chain is Ribosome-recycling factor (186 aa).

It belongs to the RRF family.

Its subcellular location is the cytoplasm. Responsible for the release of ribosomes from messenger RNA at the termination of protein biosynthesis. May increase the efficiency of translation by recycling ribosomes from one round of translation to another. The chain is Ribosome-recycling factor from Cupriavidus taiwanensis (strain DSM 17343 / BCRC 17206 / CCUG 44338 / CIP 107171 / LMG 19424 / R1) (Ralstonia taiwanensis (strain LMG 19424)).